The primary structure comprises 276 residues: Palmitoyltransferase ZDHHC22 (276 aa).

Topologically, residues 1-9 are cytoplasmic; sequence MGKLKLLNT. Residues 10 to 30 traverse the membrane as a helical segment; that stretch reads IAPAYFYAATVVTFALHFLLF. The Lumenal segment spans residues 31-45; it reads TPTIFQSSDVTINPA. Residues 46-66 form a helical membrane-spanning segment; the sequence is MLAHISIFLFLMGNALGNYIM. At 67–131 the chain is on the cytoplasmic side; it reads TIRNPSESAN…NCIGNRNMRY (65 aa). The DHHC domain maps to 101–137; sequence HFCKVCKKVILKRDHHCFFTGNCIGNRNMRYFIMFSI. The active-site S-palmitoyl cysteine intermediate is the cysteine 117. The helical transmembrane segment at 132 to 152 threads the bilayer; that stretch reads FIMFSIYTSSSCLYSLVIGVA. At 153-165 the chain is on the lumenal side; the sequence is YLTIEYSISFENP. The chain crosses the membrane as a helical span at residues 166-186; that stretch reads LTFLTLLPLSTGYFFLGLISG. Residues 187–188 lie on the Cytoplasmic side of the membrane; sequence LQ. The helical transmembrane segment at 189 to 209 threads the bilayer; sequence FFLVIMLYIWLGIGLVSVGFC. The Lumenal portion of the chain corresponds to 210–276; that stretch reads CQQLLLVARG…WQVYHDHKHD (67 aa).

Belongs to the DHHC palmitoyltransferase family.

It localises to the endoplasmic reticulum membrane. Its subcellular location is the golgi apparatus membrane. The enzyme catalyses L-cysteinyl-[protein] + hexadecanoyl-CoA = S-hexadecanoyl-L-cysteinyl-[protein] + CoA. In terms of biological role, palmitoyltransferase that could catalyze the addition of palmitate onto various protein substrates and be involved in a variety of cellular processes. The sequence is that of Palmitoyltransferase ZDHHC22 (zdhhc22) from Danio rerio (Zebrafish).